Reading from the N-terminus, the 211-residue chain is NADH-quinone oxidoreductase subunit I (211 aa).

Residues 1-27 (MANTDRPALPHKRAVPPSRADSGPRRR) are disordered. 2 consecutive 4Fe-4S ferredoxin-type domains span residues 71–101 (LNRYPDGLEKCIGCELCAWACPADAIYVEGA) and 117–146 (RVYQINYLRCIGCGLCIEACPTRALTMTYD). [4Fe-4S] cluster is bound by residues Cys-81, Cys-84, Cys-87, Cys-91, Cys-126, Cys-129, Cys-132, and Cys-136.

Belongs to the complex I 23 kDa subunit family. In terms of assembly, NDH-1 is composed of 14 different subunits. Subunits NuoA, H, J, K, L, M, N constitute the membrane sector of the complex. [4Fe-4S] cluster is required as a cofactor.

It is found in the cell membrane. It catalyses the reaction a quinone + NADH + 5 H(+)(in) = a quinol + NAD(+) + 4 H(+)(out). NDH-1 shuttles electrons from NADH, via FMN and iron-sulfur (Fe-S) centers, to quinones in the respiratory chain. The immediate electron acceptor for the enzyme in this species is believed to be menaquinone. Couples the redox reaction to proton translocation (for every two electrons transferred, four hydrogen ions are translocated across the cytoplasmic membrane), and thus conserves the redox energy in a proton gradient. The chain is NADH-quinone oxidoreductase subunit I from Mycobacterium bovis (strain ATCC BAA-935 / AF2122/97).